Here is a 614-residue protein sequence, read N- to C-terminus: 1-deoxy-D-xylulose-5-phosphate synthase (614 aa).

Thiamine diphosphate-binding positions include H74 and 115–117; that span reads AHS. D146 contacts Mg(2+). Thiamine diphosphate is bound by residues 147–148, N175, Y282, and E363; that span reads GA. Residue N175 participates in Mg(2+) binding.

It belongs to the transketolase family. DXPS subfamily. As to quaternary structure, homodimer. Mg(2+) serves as cofactor. The cofactor is thiamine diphosphate.

The catalysed reaction is D-glyceraldehyde 3-phosphate + pyruvate + H(+) = 1-deoxy-D-xylulose 5-phosphate + CO2. It participates in metabolic intermediate biosynthesis; 1-deoxy-D-xylulose 5-phosphate biosynthesis; 1-deoxy-D-xylulose 5-phosphate from D-glyceraldehyde 3-phosphate and pyruvate: step 1/1. Catalyzes the acyloin condensation reaction between C atoms 2 and 3 of pyruvate and glyceraldehyde 3-phosphate to yield 1-deoxy-D-xylulose-5-phosphate (DXP). The sequence is that of 1-deoxy-D-xylulose-5-phosphate synthase from Nitrosomonas eutropha (strain DSM 101675 / C91 / Nm57).